The following is a 380-amino-acid chain: QRFP-like peptide receptor (380 aa).

The Extracellular segment spans residues 1-51 (MMLGNMTFTQTILHELLRQHNMTKNEFIERFGLPPLVYVPELSPGAKTVTL). Residues Asn-5 and Asn-21 are each glycosylated (N-linked (GlcNAc...) asparagine). The chain crosses the membrane as a helical span at residues 52-72 (VFYVIIFLAALLGNTLVVVVV). Residues 73–83 (WKNKVMRTTMN) lie on the Cytoplasmic side of the membrane. The chain crosses the membrane as a helical span at residues 84–104 (IFICSLAASDLLITIVCIPVT). The Extracellular segment spans residues 105–122 (LMQNMLQNWIMGDFMCKL). The cysteines at positions 120 and 203 are disulfide-linked. A helical transmembrane segment spans residues 123–143 (VPFIQTIAVASSILTLTGIAI). The Cytoplasmic portion of the chain corresponds to 144–164 (ERYYAIIHPLKVKYLLSKTRA). The helical transmembrane segment at 165-185 (GIILALVWVVSVGVATPMLFV) threads the bilayer. At 186–216 (HKAEEIHDFLYEQRFVTCQEKWWGQTQQTSY) the chain is on the extracellular side. Residues 217–237 (TIFNLVVLFIIPLLTMTSLYI) traverse the membrane as a helical segment. The Cytoplasmic segment spans residues 238–269 (RIAHRLWVQQPVGVTGNFAHGNSVRRKRQAVK). The chain crosses the membrane as a helical span at residues 270 to 290 (MLVVVVLLFAVCWLPYHTVTV). The Extracellular portion of the chain corresponds to 291–305 (MNELTGLRLEEKSAK). Residues 306 to 326 (LLIAIVQLIAFSNSFNNPVVY) form a helical membrane-spanning segment. Over 327–380 (AILNENFKKNFMTMLRCRVNRVSPQQVTPNTLQTPLEQSTRSCRLPAGAPNQQI) the chain is Cytoplasmic.

The protein belongs to the G-protein coupled receptor 1 family.

Its subcellular location is the cell membrane. Its function is as follows. Receptor for QRFP-like peptide. The activity of this receptor is mediated by G proteins which activate a phosphatidyl-inositol-calcium second messenger system. The chain is QRFP-like peptide receptor from Branchiostoma floridae (Florida lancelet).